The chain runs to 104 residues: Urease subunit gamma (104 aa).

The protein belongs to the urease gamma subunit family. In terms of assembly, heterotrimer of UreA (gamma), UreB (beta) and UreC (alpha) subunits. Three heterotrimers associate to form the active enzyme.

It is found in the cytoplasm. The catalysed reaction is urea + 2 H2O + H(+) = hydrogencarbonate + 2 NH4(+). It functions in the pathway nitrogen metabolism; urea degradation; CO(2) and NH(3) from urea (urease route): step 1/1. In Actinomyces naeslundii, this protein is Urease subunit gamma.